The following is a 347-amino-acid chain: GTPase Obg (347 aa).

One can recognise an Obg domain in the interval methionine 1–leucine 159. The disordered stretch occupies residues glycine 124 to glycine 144. The region spanning alanine 160–glycine 327 is the OBG-type G domain. GTP contacts are provided by residues glycine 166 to serine 173, phenylalanine 191 to histidine 195, aspartate 212 to glycine 215, asparagine 279 to aspartate 282, and serine 308 to alanine 310. Residues serine 173 and threonine 193 each coordinate Mg(2+).

It belongs to the TRAFAC class OBG-HflX-like GTPase superfamily. OBG GTPase family. As to quaternary structure, monomer. Mg(2+) is required as a cofactor.

Its subcellular location is the cytoplasm. An essential GTPase which binds GTP, GDP and possibly (p)ppGpp with moderate affinity, with high nucleotide exchange rates and a fairly low GTP hydrolysis rate. Plays a role in control of the cell cycle, stress response, ribosome biogenesis and in those bacteria that undergo differentiation, in morphogenesis control. This is GTPase Obg from Zymomonas mobilis subsp. mobilis (strain ATCC 31821 / ZM4 / CP4).